Consider the following 506-residue polypeptide: ATP synthase subunit alpha, plastid (506 aa).

170 to 177 (GDRQTGKT) serves as a coordination point for ATP.

It belongs to the ATPase alpha/beta chains family. F-type ATPases have 2 components, CF(1) - the catalytic core - and CF(0) - the membrane proton channel. CF(1) has five subunits: alpha(3), beta(3), gamma(1), delta(1), epsilon(1). CF(0) has four main subunits: a, b, b' and c.

Its subcellular location is the plastid membrane. It catalyses the reaction ATP + H2O + 4 H(+)(in) = ADP + phosphate + 5 H(+)(out). Produces ATP from ADP in the presence of a proton gradient across the membrane. The alpha chain is a regulatory subunit. This Prototheca wickerhamii protein is ATP synthase subunit alpha, plastid.